The sequence spans 209 residues: Chloramphenicol acetyltransferase (209 aa).

Histidine 78 is an active-site residue.

It belongs to the transferase hexapeptide repeat family.

It carries out the reaction chloramphenicol + acetyl-CoA = chloramphenicol 3-acetate + CoA. This enzyme is an effector of chloramphenicol resistance in bacteria. The sequence is that of Chloramphenicol acetyltransferase (cat) from Agrobacterium fabrum (strain C58 / ATCC 33970) (Agrobacterium tumefaciens (strain C58)).